The following is a 1118-amino-acid chain: Constitutive coactivator of PPAR-gamma-like protein 1 (1118 aa).

The interval 339-405 (PPHYLAARPG…SLSEPAPLTL (67 aa)) is interaction with YES1, SRC and FYN. The disordered stretch occupies residues 374-533 (AKPVAPQVPS…GTVQPIPCLL (160 aa)). Residues 376–396 (PVAPQVPSPGGAPGQGPYPYS) show a composition bias toward low complexity. 2 stretches are compositionally biased toward polar residues: residues 405 to 420 (LDTS…SYSN) and 435 to 447 (SPIN…SPNH). Positions 481–502 (GWEKTGSHSEPQARGDPGDQTK) are enriched in basic and acidic residues. A compositionally biased stretch (polar residues) spans 503–514 (AEGSSTASSGSQ). Threonine 655 carries the phosphothreonine modification. Residues 829–1118 (ADQAAKVEKM…LEAAVLNKEE (290 aa)) form an RNA binding region. Omega-N-methylarginine occurs at positions 873, 884, and 886. The tract at residues 921 to 945 (AFSGSDSSRTSKSQGGVQPIPSQGG) is disordered. A compositionally biased stretch (polar residues) spans 924 to 936 (GSDSSRTSKSQGG). N6-acetyllysine is present on lysine 932. Serine 960 bears the Phosphoserine mark. 2 positions are modified to omega-N-methylarginine: arginine 982 and arginine 986. Serine 1023 is subject to Phosphoserine. Residues 1025-1102 (EEVAKELKSK…HLNALSTDSA (78 aa)) form a disordered region. Over residues 1026–1037 (EVAKELKSKSGE) the composition is skewed to basic and acidic residues. The segment covering 1038–1051 (SKSSAMSSDGSLAE) has biased composition (low complexity). A phosphoserine mark is found at serine 1044, serine 1045, and serine 1048. Polar residues predominate over residues 1076 to 1101 (HSESALNNDSKTCNTNPHLNALSTDS).

Belongs to the constitutive coactivator of PPAR-gamma family. In terms of assembly, interacts with PURA. Interacts with SRC family protein kinases YES1, SRC and FYN. Upon tyrosine phosphorylation, interacts with PIK3R1. Interacts with IGF2BP1/IMP-1 in an RNA-dependent manner. Arg-982 is dimethylated, probably to asymmetric dimethylarginine. Post-translationally, phosphorylated on tyrosine by SRC family protein kinases upon oxidative stress, for instance following UV irradiation. As to expression, widely expressed. In gastric mucosa, detected in the bottom region of the foveolar epithelium (at protein level).

It is found in the cytoplasm. The protein localises to the cell membrane. Component of the oxidative stress-induced survival signaling. May regulate the activation of SRC family protein kinases. May act as a scaffolding protein enabling SRC family protein kinases to phosphorylate and activate PI3-kinase. Binds IGF2 RNA and promotes the production of IGF2 protein. This is Constitutive coactivator of PPAR-gamma-like protein 1 (FAM120A) from Homo sapiens (Human).